A 546-amino-acid polypeptide reads, in one-letter code: Alpha-isocomene synthase (546 aa).

Aspartate 299, aspartate 303, aspartate 443, and glutamate 451 together coordinate Mg(2+). Positions aspartate 299–aspartate 303 match the DDXXD motif motif.

This sequence belongs to the terpene synthase family. Tpsa subfamily. Requires Mg(2+) as cofactor. It depends on Mn(2+) as a cofactor. In terms of tissue distribution, highly expressed in roots, lower levels in stems and leaves and detected in disk florets, but not in ray florets.

It catalyses the reaction (2E,6E)-farnesyl diphosphate = (-)-alpha-isocomene + diphosphate. It participates in secondary metabolite biosynthesis; terpenoid biosynthesis. Its function is as follows. Sesquiterpene synthase involved in the biosynthesis of alpha-isocomene as the major product and detectable amounts of beta-caryophyllene, beta-isocomene, silphinene and modeph-2-ene. Produces exclusively the (-)-(E)-beta caryophyllene enantiomer. The chain is Alpha-isocomene synthase from Matricaria chamomilla var. recutita (German chamomile).